A 392-amino-acid chain; its full sequence is Mitochondrial distribution and morphology protein 10 (392 aa).

The protein belongs to the MDM10 family. As to quaternary structure, component of the ER-mitochondria encounter structure (ERMES) or MDM complex, composed of MMM1, MDM10, MDM12 and MDM34. Associates with the mitochondrial outer membrane sorting assembly machinery SAM(core) complex.

The protein resides in the mitochondrion outer membrane. Its function is as follows. Component of the ERMES/MDM complex, which serves as a molecular tether to connect the endoplasmic reticulum and mitochondria. Components of this complex are involved in the control of mitochondrial shape and protein biogenesis and may function in phospholipid exchange. MDM10 is involved in the late assembly steps of the general translocase of the mitochondrial outer membrane (TOM complex). Functions in the TOM40-specific route of the assembly of outer membrane beta-barrel proteins, including the association of TOM40 with the receptor TOM22 and small TOM proteins. Can associate with the SAM(core) complex as well as the MDM12-MMM1 complex, both involved in late steps of the major beta-barrel assembly pathway, that is responsible for biogenesis of all outer membrane beta-barrel proteins. May act as a switch that shuttles between both complexes and channels precursor proteins into the TOM40-specific pathway. Plays a role in mitochondrial morphology and in the inheritance of mitochondria. This Phaeosphaeria nodorum (strain SN15 / ATCC MYA-4574 / FGSC 10173) (Glume blotch fungus) protein is Mitochondrial distribution and morphology protein 10.